The chain runs to 1318 residues: Maestro heat-like repeat family member 5 (1318 aa).

A disordered region spans residues 1–38 (MDRQCSERPYSCTPTGRVSSAVSQNSRISPPVSTSMKD). Polar residues predominate over residues 12-38 (CTPTGRVSSAVSQNSRISPPVSTSMKD). The HEAT 1 repeat unit spans residues 581 to 618 (DELHFLLSHLYIWLASEKAHERQRAVHSCMILLKFLNH). Residues 676 to 695 (ESQAPKELSQAHSDGAPLWN) are disordered. HEAT repeat units lie at residues 769–811 (GAKL…SHTC), 840–880 (PTSH…LLAA), 996–1033 (RQIP…SPVL), 1037–1074 (LPKQ…HPDK), 1076–1113 (SLLQ…RLGA), 1118–1155 (SQSL…AMAD), 1164–1200 (QVHQ…LLRW), and 1278–1315 (VDTN…VSAR).

In Homo sapiens (Human), this protein is Maestro heat-like repeat family member 5 (MROH5).